The following is a 469-amino-acid chain: Cholesterol 7-desaturase nvd (469 aa).

Residues 1 to 25 (MASFCASKFLPGLLMLGLGLAVALA) form the signal peptide. Residues 58–78 (NFVASQTLLTLTIFGVASFIL) form a helical membrane-spanning segment. In terms of domain architecture, Rieske spans 132-238 (IPLVASQDLV…VIEQNGFVLV (107 aa)). C172, H174, C192, and H195 together coordinate [2Fe-2S] cluster.

It belongs to the cholesterol 7-desaturase family. Requires [2Fe-2S] cluster as cofactor.

Its subcellular location is the membrane. It carries out the reaction cholesterol + NADPH + O2 + H(+) = 7-dehydrocholesterol + NADP(+) + 2 H2O. It catalyses the reaction cholesterol + NADH + O2 + H(+) = 7-dehydrocholesterol + NAD(+) + 2 H2O. It participates in steroid hormone biosynthesis; dafachronic acid biosynthesis. Its function is as follows. Catalyzes the production of 7-dehydrocholesterol (7-DHC or cholesta-5,7-dien-3beta-ol) by inserting a double bond (desaturating) at the C7-C8 single bond of cholesterol. Essential regulator of steroid biosynthesis as this reaction is the first step in the synthesis of the steroid hormone Delta(7)-dafachronic acid. The protein is Cholesterol 7-desaturase nvd of Hemicentrotus pulcherrimus (Sea urchin).